Here is a 61-residue protein sequence, read N- to C-terminus: Large ribosomal subunit protein uL30 (61 aa).

The protein belongs to the universal ribosomal protein uL30 family. Part of the 50S ribosomal subunit.

The protein is Large ribosomal subunit protein uL30 of Neisseria meningitidis serogroup C (strain 053442).